Consider the following 102-residue polypeptide: Putative septation protein SpoVG 2 (102 aa).

This sequence belongs to the SpoVG family.

Could be involved in septation. In Listeria innocua serovar 6a (strain ATCC BAA-680 / CLIP 11262), this protein is Putative septation protein SpoVG 2.